The following is a 245-amino-acid chain: uncharacterized protein (245 aa).

The N-terminal stretch at 1–18 is a signal peptide; that stretch reads MKSAAILALLAQALAVTA. Residues 21–66 form a disordered region; that stretch reads VEGDRTPGTRTLDLPNFPGGSVPTRGVEKRADLPPDNGGGNAPDPD. Asn-189 and Asn-225 each carry an N-linked (GlcNAc...) asparagine glycan.

It localises to the secreted. This is an uncharacterized protein from Arthroderma benhamiae (strain ATCC MYA-4681 / CBS 112371) (Trichophyton mentagrophytes).